The following is a 937-amino-acid chain: Aconitate hydratase A (937 aa).

A disordered region spans residues 410-450 (MANEGGFQPGSTSDLDNYNASWPGEGESAAANAEGRPSNPV). Positions 418–429 (PGSTSDLDNYNA) are enriched in polar residues. Residues 433–444 (GEGESAAANAEG) show a composition bias toward low complexity. [4Fe-4S] cluster contacts are provided by Cys-475, Cys-541, and Cys-544.

It belongs to the aconitase/IPM isomerase family. As to quaternary structure, monomer. Requires [4Fe-4S] cluster as cofactor.

The catalysed reaction is citrate = D-threo-isocitrate. It carries out the reaction (2S,3R)-3-hydroxybutane-1,2,3-tricarboxylate = 2-methyl-cis-aconitate + H2O. Its pathway is carbohydrate metabolism; tricarboxylic acid cycle; isocitrate from oxaloacetate: step 2/2. It participates in organic acid metabolism; propanoate degradation. Involved in the catabolism of short chain fatty acids (SCFA) via the tricarboxylic acid (TCA)(acetyl degradation route) and probably via the 2-methylcitrate cycle I (propionate degradation route). Catalyzes the reversible isomerization of citrate to isocitrate via cis-aconitate. Could catalyze the hydration of 2-methyl-cis-aconitate to yield (2R,3S)-2-methylisocitrate. The apo form of AcnA functions as a RNA-binding regulatory protein. The protein is Aconitate hydratase A (acn) of Corynebacterium efficiens (strain DSM 44549 / YS-314 / AJ 12310 / JCM 11189 / NBRC 100395).